Reading from the N-terminus, the 342-residue chain is Putative anthocyanidin reductase (342 aa).

NADP(+) contacts are provided by residues arginine 44, lysine 51, 71 to 72 (EL), 91 to 93 (VAT), tyrosine 172, lysine 176, 199 to 202 (PVLV), and serine 214. The active-site Proton donor is the lysine 176.

This sequence belongs to the NAD(P)-dependent epimerase/dehydratase family. Dihydroflavonol-4-reductase subfamily. As to expression, highly expressed in leaves and weakly in stems. Not expressed in roots.

It participates in secondary metabolite biosynthesis; flavonoid biosynthesis. The chain is Putative anthocyanidin reductase from Ginkgo biloba (Ginkgo).